We begin with the raw amino-acid sequence, 243 residues long: MNASQDTIYAQASEHISDFQFDNRVAGVFSDMIRRSVPGYTQIINTIGDFADRFVKPNTQVYDLGCSLGAATLSIRRQIQGRDCRIIAVDNSESMVTRCQENLNAYVSDTEVELICGDIRDIHIENASLVVLNFTLQFLPPEDREALIAKIYHGLNPGGLLVLSEKIRFDDAPIQSVLEELHLDFKRANGYSELEISQKRSALENVMKPDTLTLHQQRLTRQGFSHFSLWFQCFNFSSMVAIK.

S-adenosyl-L-methionine is bound by residues Y40, 65–67, 90–91, 118–119, N133, and R200; these read GCS, DN, and DI.

The protein belongs to the class I-like SAM-binding methyltransferase superfamily. Cx-SAM synthase family. In terms of assembly, homodimer.

The catalysed reaction is prephenate + S-adenosyl-L-methionine = carboxy-S-adenosyl-L-methionine + 3-phenylpyruvate + H2O. In terms of biological role, catalyzes the conversion of S-adenosyl-L-methionine (SAM) to carboxy-S-adenosyl-L-methionine (Cx-SAM). In Shewanella sp. (strain ANA-3), this protein is Carboxy-S-adenosyl-L-methionine synthase.